Consider the following 382-residue polypeptide: Chaperone protein DnaJ (382 aa).

The J domain maps to 6-70 (DYYEILGLPK…EKRAQYDRFG (65 aa)). The CR-type zinc finger occupies 131 to 213 (GVRKDIDIPR…CGGAGRVRNK (83 aa)). 8 residues coordinate Zn(2+): Cys-144, Cys-147, Cys-161, Cys-164, Cys-187, Cys-190, Cys-201, and Cys-204. CXXCXGXG motif repeat units follow at residues 144–151 (CSTCSGTG), 161–168 (CPTCGGTG), 187–194 (CSTCHGRG), and 201–208 (CPVCGGAG). Residues 146–168 (TCSGTGAKPGTSPKRCPTCGGTG) form a disordered region. The disordered stretch occupies residues 348–382 (FENLSKGKKPQEEEKSKAEKHKKGIFEKVKDAFES). The span at 371–382 (GIFEKVKDAFES) shows a compositional bias: basic and acidic residues.

This sequence belongs to the DnaJ family. As to quaternary structure, homodimer. Requires Zn(2+) as cofactor.

Its subcellular location is the cytoplasm. Its function is as follows. Participates actively in the response to hyperosmotic and heat shock by preventing the aggregation of stress-denatured proteins and by disaggregating proteins, also in an autonomous, DnaK-independent fashion. Unfolded proteins bind initially to DnaJ; upon interaction with the DnaJ-bound protein, DnaK hydrolyzes its bound ATP, resulting in the formation of a stable complex. GrpE releases ADP from DnaK; ATP binding to DnaK triggers the release of the substrate protein, thus completing the reaction cycle. Several rounds of ATP-dependent interactions between DnaJ, DnaK and GrpE are required for fully efficient folding. Also involved, together with DnaK and GrpE, in the DNA replication of plasmids through activation of initiation proteins. The polypeptide is Chaperone protein DnaJ (Methanosarcina acetivorans (strain ATCC 35395 / DSM 2834 / JCM 12185 / C2A)).